Consider the following 194-residue polypeptide: uncharacterized protein (194 aa).

This is an uncharacterized protein from Tomato ringspot virus (isolate raspberry) (ToRSV).